Here is a 117-residue protein sequence, read N- to C-terminus: MAVYVKFEISQELEEKTAEVVANAEKIKKGANEVTKAVEKGIAKLVVIAQDVQPEEIVAHIPVICDEKGIAYSYSSTKEALGKAAGLEVPTSAIAVVAEGSADELKDLVEKLNGLKA.

This sequence belongs to the eukaryotic ribosomal protein eL8 family. Part of the 50S ribosomal subunit. Part of the RNase P complex.

The protein localises to the cytoplasm. The catalysed reaction is Endonucleolytic cleavage of RNA, removing 5'-extranucleotides from tRNA precursor.. In terms of biological role, multifunctional RNA-binding protein that recognizes the K-turn motif in ribosomal RNA, the RNA component of RNase P, box H/ACA, box C/D and box C'/D' sRNAs. Part of ribonuclease P, a protein complex that generates mature tRNA molecules by cleaving their 5'-ends, this subunit dramatically stimulates RNase P activity. The sequence is that of Large ribosomal subunit protein eL8 from Methanococcus maripaludis (strain DSM 14266 / JCM 13030 / NBRC 101832 / S2 / LL).